The primary structure comprises 76 residues: Omega/Kappa-hexatoxin-Hv1h (76 aa).

Residues 1 to 22 form the signal peptide; it reads MNTATGFIVLLVLATILGGIEA. The propeptide occupies 23–35; it reads GESHMRKDAMGRV. 3 disulfide bridges follow: Cys40/Cys55, Cys47/Cys60, and Cys54/Cys74.

The protein belongs to the neurotoxin 08 (Shiva) family. 02 (omega/kappa toxin) subfamily. Expressed by the venom gland.

The protein localises to the secreted. Toxin that may inhibit ion channels. This chain is Omega/Kappa-hexatoxin-Hv1h, found in Hadronyche versuta (Blue mountains funnel-web spider).